The primary structure comprises 166 residues: Bacterial microcompartment shell protein EutK (166 aa).

Residues 4-88 (ALGLLEVDGM…PDDDTQWLVT (85 aa)) enclose the BMC domain. The 57-residue stretch at 109 to 165 (ESADELLALLTSVRQGMTAGEVAAHFGWPLEKARNALEQLFSAGTLRKRSSRYRLKP) folds into the EutK-Ctail domain.

The protein belongs to the bacterial microcompartments protein family. As to quaternary structure, monomeric in solution.

Its subcellular location is the bacterial microcompartment. It participates in amine and polyamine degradation; ethanolamine degradation. Probably a minor component of the bacterial microcompartment (BMC) shell dedicated to ethanolamine degradation. It might bind nucleic acids. The polypeptide is Bacterial microcompartment shell protein EutK (eutK) (Escherichia coli (strain K12)).